Reading from the N-terminus, the 1190-residue chain is Ras-specific guanine nucleotide-releasing factor 2 (1190 aa).

Positions 22 to 133 (EGTKRGFLSK…WMEAIHQASY (112 aa)) constitute a PH 1 domain. Residues 155 to 193 (ETEKIAANQLRHQLEDQDTEIERLKSEIVALNKTKERMR) adopt a coiled-coil conformation. Residues 205–234 (DIKKIKKVQSFMRGWLCRRKWKTIVQDYIC) form the IQ domain. In terms of domain architecture, DH spans 243–429 (KRNQIVFTMV…EELSRVMHDE (187 aa)). Positions 470–588 (PSVERGKLSK…WMSDISQCVD (119 aa)) constitute a PH 2 domain. The region spanning 635 to 755 (KVPQIRYASV…LTSSLNSRIG (121 aa)) is the N-terminal Ras-GEF domain. The interval 713 to 744 (VDGKSPRLCRKFSSPPPLAVSRTSSPVRARKL) is disordered. Serine 725 and serine 726 each carry phosphoserine. Serine 736 is subject to Phosphoserine; by CDK5. The interval 743–751 (KLSLTSSLN) is regulates proteasomal degradation. Residues serine 745 and serine 749 each carry the phosphoserine modification. The segment at 757–826 (LDLTTSSSSS…QPGGQVADST (70 aa)) is disordered. A compositionally biased stretch (low complexity) spans 760–776 (TTSSSSSSPTTTVHSPA). Residues 798–810 (TDMSPCRSPSTTP) show a composition bias toward polar residues. Phosphoserine occurs at positions 801, 805, and 925. The 233-residue stretch at 955–1187 (SAMELAEQIT…YELSLKIEPR (233 aa)) folds into the Ras-GEF domain. Residues 1052–1081 (ALNRSAIYRLKKTWTKVSKQTKALMDKLQK) form a responsible of the affinity for farnesylated versus geranylgeranylated Ras region.

In terms of assembly, homooligomer and heterooligomer with RASGRF1. Interacts with Ras and RAC1. Interacts in a calcium-dependent manner with calmodulin. Interacts with CDK5R1 and probably EPB49. Interacts with the AMPA receptor through GRIA1. Interacts with microtubules. Phosphorylated by CDK5; down-regulates RASGRF2-mediated RAC1 activation. Post-translationally, ubiquitinated upon interaction with Ras. Ubiquitination leads to degradation through the 26S proteasome. In terms of tissue distribution, widely expressed. Detected in brain, lung, spleen, pancreas, kidney, liver, heart, mammary gland and skeletal muscle.

The protein localises to the cytoplasm. It is found in the cell membrane. The protein resides in the endoplasmic reticulum membrane. In terms of biological role, functions as a calcium-regulated nucleotide exchange factor activating both Ras and RAC1 through the exchange of bound GDP for GTP. Preferentially activates HRAS in vivo compared to RRAS based on their different types of prenylation. Functions in synaptic plasticity by contributing to the induction of long term potentiation. The protein is Ras-specific guanine nucleotide-releasing factor 2 (Rasgrf2) of Rattus norvegicus (Rat).